Here is a 212-residue protein sequence, read N- to C-terminus: MPQTDKQICIPPELPELLKQFTKAAIRSQPQDLIQWAAEYFGAMSRGEIPPVRERSERVALSNWAELTPELLKILHSRVGGRLIVQADELAQMWKVLNLPTDLFNSVMNVGRFTEEIEWLKFLALACSSLGVTIAKTLKIVCEVLSSDHDSGPPRIPFSTFQFLYTYIAEVDGEISASHVSRMLNYIEQEVIGPDGLIKVNDFTQNPRVRLE.

The RIIa domain occupies Pro12–Ala43. The residue at position 56 (Ser56) is a Phosphoserine. Residues Val209 to Glu212 form an interaction with RHPN1 region.

This sequence belongs to the ropporin family. As to quaternary structure, homodimer. Interacts with AKAP3. May interact with SPA17. Interacts with RHPN1. Interacts with FSCB; the interaction increases upon spermatozoa capacitation conditions. Interacts with CFAP61. Sumoylated, sumoylation decreases upon spermatozoa capacitation conditions.

The protein resides in the cell projection. It localises to the cilium. Its subcellular location is the flagellum. Important for male fertility. With ROPN1L, involved in fibrous sheath integrity and sperm motility, plays a role in PKA-dependent signaling processes required for spermatozoa capacitation. The polypeptide is Ropporin-1 (ROPN1) (Bos taurus (Bovine)).